The primary structure comprises 548 residues: Frizzled-7-B (548 aa).

Positions 1 to 18 are cleaved as a signal peptide; that stretch reads MLAPVSLLFCLFLQLCPS. Residues 19–230 are Extracellular-facing; that stretch reads AQQYHGEKGI…EEEVRFARLW (212 aa). The FZ domain maps to 31–150; that stretch reads PDHGFCQPIS…HGAGEICVGQ (120 aa). 5 disulfides stabilise this stretch: C36–C97, C44–C90, C81–C118, C107–C147, and C111–C135. A glycan (N-linked (GlcNAc...) asparagine) is linked at N50. N151 carries N-linked (GlcNAc...) asparagine glycosylation. The helical transmembrane segment at 231–251 threads the bilayer; that stretch reads VGIWAILCGISTLFTVLTYLV. The Cytoplasmic portion of the chain corresponds to 252 to 262; the sequence is DMRRFSYPERP. The chain crosses the membrane as a helical span at residues 263–283; it reads IIFLSGCYFMVAVAYTAGFLL. Residues 284–311 are Extracellular-facing; that stretch reads EERAVCVERFSEDSYRTVAQGTKKEGCT. A helical transmembrane segment spans residues 312-332; sequence ILFMILYFFGMASSIWWVILA. Residues 333–353 are Cytoplasmic-facing; it reads LTWFLSAGMKWGHEAIEANSQ. The chain crosses the membrane as a helical span at residues 354–374; sequence YFHLAAWAVPAVKTITILAMG. The Extracellular portion of the chain corresponds to 375 to 397; that stretch reads QVDGDVLSGVCYVGINSVDSLRG. Residues 398 to 418 form a helical membrane-spanning segment; the sequence is FVLAPLFVYLFLGTSFLLAGF. The Cytoplasmic portion of the chain corresponds to 419-444; it reads VSLFRIRTIMKHDGTKTEKLEKLMVR. The chain crosses the membrane as a helical span at residues 445-465; sequence IGVFSVMYTVPATIVLACYFY. Residues 466 to 502 are Extracellular-facing; the sequence is EQAFRDTWEKTWLVHTCKGYAVPCPNYNFAPMSPDFT. A helical transmembrane segment spans residues 503–523; it reads VFMIKYLMTMIVGITSSFWIW. At 524–548 the chain is on the cytoplasmic side; that stretch reads SGKTLQSWRRFYHRLGNGSKGETAV. A Lys-Thr-X-X-X-Trp motif, mediates interaction with the PDZ domain of Dvl family members motif is present at residues 526-531; that stretch reads KTLQSW. Positions 546-548 match the PDZ-binding motif; the sequence is TAV.

This sequence belongs to the G-protein coupled receptor Fz/Smo family. Interacts with wnt11 and sdc4. The extracellular domain interacts with the extracellular domain of pcdh8/papc. Interacts (via C-terminus) with dvl1 (via PDZ domain). In terms of tissue distribution, during gastrulation, broadly expressed on the dorsal side of the embryo in deep mesodermal cells surrounding the blastopore lip and in presumptive anterior neuroectoderm. During neurulation, localized to the cranial neural crest and heart field where expression is retained at later stages in addition to new areas of expression in the neural tube, pronephros and tailbud. At tailbud stage, expressed in the pronephric duct, and broad head expression becomes more restricted to the hindbrain. In tadpoles, strongly expressed in the eye and the pericardium and myocardium of the developing heart.

It is found in the cell membrane. The protein localises to the endosome membrane. Functionally, receptor for Wnt proteins. Acts in both canonical and non-canonical Wnt pathways. Although different papers report differing Wnt preferences, wnt5a, wnt8b and wnt11 have been proposed as synergists. In the canonical Wnt pathway, acts via beta-catenin to promote the expression of the dorsal genes siamois, twin and nodal3 and to establish the dorsal axis of the embryo and induce dorsal mesoderm formation. In a non-canonical Wnt/planar cell polarity (PCP) pathway, acts with sdc4 and dvl2/dsh to regulate convergent extension cell movements during gastrulation. Triggers phosphorylation of dvl2/dsh and its translocation to the plasma membrane. In a third branch of Wnt signaling, acts in a non-canonical pathway via trimeric G proteins, and independently of dvl2/dsh, to recruit protein kinase C (PKC) to the membrane and thus activate PKC. PKC signaling controls cell sorting and tissue separation during gastrulation. The protein is Frizzled-7-B (fzd7-b) of Xenopus laevis (African clawed frog).